We begin with the raw amino-acid sequence, 165 residues long: MNALLTPDYGLIFWTIVNFLLLVFLLGKFAWKPIIGALEARENKISQDKKDAQEARDEAQKIKAELDVRLSNISKEAQEKLAQVEALAKQQKDAMIKDAQASSERMIATAKEEIEAQKNQALKEVKKEIADMAVEAAAKIAGVKTDPKTDAALVDNIVKDIINKA.

The helical transmembrane segment at 11 to 31 (LIFWTIVNFLLLVFLLGKFAW) threads the bilayer.

This sequence belongs to the ATPase B chain family. In terms of assembly, F-type ATPases have 2 components, F(1) - the catalytic core - and F(0) - the membrane proton channel. F(1) has five subunits: alpha(3), beta(3), gamma(1), delta(1), epsilon(1). F(0) has three main subunits: a(1), b(2) and c(10-14). The alpha and beta chains form an alternating ring which encloses part of the gamma chain. F(1) is attached to F(0) by a central stalk formed by the gamma and epsilon chains, while a peripheral stalk is formed by the delta and b chains.

The protein localises to the cell membrane. F(1)F(0) ATP synthase produces ATP from ADP in the presence of a proton or sodium gradient. F-type ATPases consist of two structural domains, F(1) containing the extramembraneous catalytic core and F(0) containing the membrane proton channel, linked together by a central stalk and a peripheral stalk. During catalysis, ATP synthesis in the catalytic domain of F(1) is coupled via a rotary mechanism of the central stalk subunits to proton translocation. Its function is as follows. Component of the F(0) channel, it forms part of the peripheral stalk, linking F(1) to F(0). The chain is ATP synthase subunit b from Elusimicrobium minutum (strain Pei191).